The sequence spans 310 residues: tRNA dimethylallyltransferase (310 aa).

Residue 15–22 participates in ATP binding; sequence GATASGKT. 17–22 is a binding site for substrate; it reads TASGKT.

It belongs to the IPP transferase family. In terms of assembly, monomer. Requires Mg(2+) as cofactor.

It catalyses the reaction adenosine(37) in tRNA + dimethylallyl diphosphate = N(6)-dimethylallyladenosine(37) in tRNA + diphosphate. Catalyzes the transfer of a dimethylallyl group onto the adenine at position 37 in tRNAs that read codons beginning with uridine, leading to the formation of N6-(dimethylallyl)adenosine (i(6)A). The sequence is that of tRNA dimethylallyltransferase from Nocardioides sp. (strain ATCC BAA-499 / JS614).